The primary structure comprises 206 residues: Ion-translocating oxidoreductase complex subunit G (206 aa).

A helical membrane pass occupies residues 9 to 29; the sequence is GITLALFAAGSTGLTAVINQM. Residue Thr174 is modified to FMN phosphoryl threonine.

The protein belongs to the RnfG family. In terms of assembly, the complex is composed of six subunits: RsxA, RsxB, RsxC, RsxD, RsxE and RsxG. It depends on FMN as a cofactor.

It is found in the cell inner membrane. Part of a membrane-bound complex that couples electron transfer with translocation of ions across the membrane. Required to maintain the reduced state of SoxR. The protein is Ion-translocating oxidoreductase complex subunit G of Salmonella typhimurium (strain LT2 / SGSC1412 / ATCC 700720).